Here is a 200-residue protein sequence, read N- to C-terminus: 3-isopropylmalate dehydratase small subunit (200 aa).

Belongs to the LeuD family. LeuD type 1 subfamily. As to quaternary structure, heterodimer of LeuC and LeuD.

The catalysed reaction is (2R,3S)-3-isopropylmalate = (2S)-2-isopropylmalate. Its pathway is amino-acid biosynthesis; L-leucine biosynthesis; L-leucine from 3-methyl-2-oxobutanoate: step 2/4. Catalyzes the isomerization between 2-isopropylmalate and 3-isopropylmalate, via the formation of 2-isopropylmaleate. This chain is 3-isopropylmalate dehydratase small subunit, found in Saccharopolyspora erythraea (strain ATCC 11635 / DSM 40517 / JCM 4748 / NBRC 13426 / NCIMB 8594 / NRRL 2338).